Consider the following 416-residue polypeptide: Enterobactin exporter EntS (416 aa).

The Cytoplasmic portion of the chain corresponds to Met-1–Ala-21. A helical membrane pass occupies residues Val-22 to Val-42. Topologically, residues Gln-43 to Gly-55 are periplasmic. Residues Leu-56–Ala-76 form a helical membrane-spanning segment. The Cytoplasmic segment spans residues Asp-77 to Lys-83. Residues Val-84–Leu-104 traverse the membrane as a helical segment. Residues Leu-105–Ser-109 lie on the Periplasmic side of the membrane. A helical transmembrane segment spans residues Leu-110–Ala-130. Residues Leu-131–Arg-156 lie on the Cytoplasmic side of the membrane. Residues Leu-157–Trp-177 traverse the membrane as a helical segment. Residue Asn-178 is a topological domain, periplasmic. A helical membrane pass occupies residues Tyr-179–Leu-199. At Pro-200 to Arg-218 the chain is on the cytoplasmic side. Residues Phe-219–Ala-239 form a helical membrane-spanning segment. Residues Ser-240–Ser-256 lie on the Periplasmic side of the membrane. Residues Ala-257–Thr-277 form a helical membrane-spanning segment. Topologically, residues Ser-278–Pro-287 are cytoplasmic. Residues Gly-288–Leu-307 form a helical membrane-spanning segment. Topologically, residues Met-308–Leu-313 are periplasmic. Residues Gly-314–Leu-336 traverse the membrane as a helical segment. The Cytoplasmic portion of the chain corresponds to Gln-337 to Asn-356. A helical transmembrane segment spans residues Val-357–Val-377. Position 378 (Ala-378) is a topological domain, periplasmic. Residues Ser-379–Val-399 form a helical membrane-spanning segment. Topologically, residues Glu-400–Ser-416 are cytoplasmic.

Belongs to the major facilitator superfamily. EntS (TC 2.A.1.38) family.

The protein localises to the cell inner membrane. Component of an export pathway for enterobactin. The polypeptide is Enterobactin exporter EntS (Shigella boydii serotype 18 (strain CDC 3083-94 / BS512)).